The primary structure comprises 468 residues: 6-phosphogluconate dehydrogenase, decarboxylating (468 aa).

NADP(+) contacts are provided by residues glycine 10 to glycine 15, asparagine 33 to serine 35, valine 74 to alanine 76, and asparagine 102. Residues asparagine 102 and serine 128–glycine 130 contribute to the substrate site. Lysine 183 acts as the Proton acceptor in catalysis. Histidine 186–asparagine 187 contributes to the substrate binding site. Glutamate 190 acts as the Proton donor in catalysis. Positions 191, 260, 287, 445, and 451 each coordinate substrate.

Belongs to the 6-phosphogluconate dehydrogenase family. As to quaternary structure, homodimer.

The enzyme catalyses 6-phospho-D-gluconate + NADP(+) = D-ribulose 5-phosphate + CO2 + NADPH. It functions in the pathway carbohydrate degradation; pentose phosphate pathway; D-ribulose 5-phosphate from D-glucose 6-phosphate (oxidative stage): step 3/3. In terms of biological role, catalyzes the oxidative decarboxylation of 6-phosphogluconate to ribulose 5-phosphate and CO(2), with concomitant reduction of NADP to NADPH. This Escherichia coli (strain K12) protein is 6-phosphogluconate dehydrogenase, decarboxylating (gnd).